A 328-amino-acid polypeptide reads, in one-letter code: Sterol-4-alpha-carboxylate 3-dehydrogenase, decarboxylating (328 aa).

Y145 acts as the Proton acceptor in catalysis. K149 contacts NAD(+). A helical membrane pass occupies residues 259 to 279 (LHMVLPTPIALSLVWIMALIW).

The protein belongs to the 3-beta-HSD family. As to quaternary structure, homodimer.

The protein resides in the endoplasmic reticulum membrane. Its subcellular location is the lipid droplet. The catalysed reaction is a 3beta-hydroxysteroid-4alpha-carboxylate + NADP(+) = a 3-oxosteroid + CO2 + NADPH. It catalyses the reaction a 3beta-hydroxysteroid-4alpha-carboxylate + NAD(+) = a 3-oxosteroid + CO2 + NADH. It functions in the pathway steroid biosynthesis; zymosterol biosynthesis; zymosterol from lanosterol: step 4/6. Catalyzes the NAD(P)(+)-dependent oxidative decarboxylation of the C4 methyl groups of 4-alpha-carboxysterols in post-squalene cholesterol biosynthesis. This Dictyostelium discoideum (Social amoeba) protein is Sterol-4-alpha-carboxylate 3-dehydrogenase, decarboxylating (nsdhl).